The primary structure comprises 284 residues: Bifunctional protein FolD (284 aa).

Residues 165-167, Ser190, and Ile231 contribute to the NADP(+) site; that span reads GAS.

The protein belongs to the tetrahydrofolate dehydrogenase/cyclohydrolase family. In terms of assembly, homodimer.

It carries out the reaction (6R)-5,10-methylene-5,6,7,8-tetrahydrofolate + NADP(+) = (6R)-5,10-methenyltetrahydrofolate + NADPH. The catalysed reaction is (6R)-5,10-methenyltetrahydrofolate + H2O = (6R)-10-formyltetrahydrofolate + H(+). It functions in the pathway one-carbon metabolism; tetrahydrofolate interconversion. Its function is as follows. Catalyzes the oxidation of 5,10-methylenetetrahydrofolate to 5,10-methenyltetrahydrofolate and then the hydrolysis of 5,10-methenyltetrahydrofolate to 10-formyltetrahydrofolate. In Polynucleobacter asymbioticus (strain DSM 18221 / CIP 109841 / QLW-P1DMWA-1) (Polynucleobacter necessarius subsp. asymbioticus), this protein is Bifunctional protein FolD.